The sequence spans 1009 residues: Protein-tyrosine kinase 2-beta (1009 aa).

The 321-residue stretch at 39-359 (RILKVCFYSN…GYCRLQGEHK (321 aa)) folds into the FERM domain. 3 positions are modified to phosphoserine: Ser361, Ser375, and Ser399. A Phosphotyrosine; by autocatalysis modification is found at Tyr402. The region spanning 425-683 (VVLNRILGEG…ELVCSLSDIY (259 aa)) is the Protein kinase domain. ATP contacts are provided by residues 431-439 (LGEGFFGEV), Lys457, and 503-509 (ELYPYGE). The active-site Proton acceptor is Asp549. A Phosphotyrosine modification is found at Tyr579. Tyr580 is subject to Phosphotyrosine; by SRC, FYN and LCK. A disordered region spans residues 696–728 (NARYRPPKILEPTTFQEPPPKPSRPKYRPPPQT). The segment covering 712-727 (EPPPKPSRPKYRPPPQ) has biased composition (pro residues). Tyr722 is modified (phosphotyrosine). Ser762 bears the Phosphoserine mark. Thr765 bears the Phosphothreonine mark. The interaction with TGFB1I1 stretch occupies residues 801–1009 (KIKMKQVLER…VANLAHPPAE (209 aa)). Tyr834 carries the phosphotyrosine modification. Ser839 is modified (phosphoserine). Thr842 is subject to Phosphothreonine. Residue Tyr849 is modified to Phosphotyrosine. Ser866 carries the post-translational modification Phosphoserine. The interval 868–1009 (QPTANLDRTD…VANLAHPPAE (142 aa)) is focal adhesion targeting (FAT). A Phosphotyrosine modification is found at Tyr881.

The protein belongs to the protein kinase superfamily. Tyr protein kinase family. FAK subfamily. Homodimer, or homooligomer. Interacts with KCNA2. Interacts with NPHP1, ASAP1, ASAP2, ARHGAP26, SKAP2 and TGFB1I1. The Tyr-402 phosphorylated form interacts with SRC (via SH2 domain) and SRC family members. Forms a signaling complex with EPHA1, LCK and phosphatidylinositol 3-kinase; upon activation by EFNA1. Interacts with GRB2 (via SH2 domain). Interacts with P53/TP53 and MDM2. Interacts with MYLK. Interacts with BCAR1. Interacts with RB1CC1. Interacts with RHOU. Interacts with VAV1. Interacts with PDPK1. Interacts with DLG4. Interacts with LPXN and PTPN12. Interacts with SIRPA and SH2D3C. Interacts (hypophosphorylated) with PXN. Interacts with ARHGAP10. Post-translationally, phosphorylated on tyrosine residues in response to various stimuli that elevate the intracellular calcium concentration; this activation is indirect and may be mediated by production of reactive oxygen species (ROS). Tyr-402 is the major autophosphorylation site, but other kinases can also phosphorylate Tyr-402. Autophosphorylation occurs in trans, i.e. one subunit of the dimeric receptor phosphorylates tyrosine residues on the other subunit. Phosphorylation at Tyr-402 promotes interaction with SRC and SRC family members, leading to phosphorylation at Tyr-579; Tyr-580 and Tyr-881. Phosphorylation at Tyr-881 is important for interaction with GRB2. Phosphorylated on tyrosine residues upon activation of FGR and PKC. Recruitment by NPHP1 to cell matrix adhesions initiates Tyr-402 phosphorylation. In monocytes, adherence to substrata is required for tyrosine phosphorylation and kinase activation. Angiotensin II, thapsigargin and L-alpha-lysophosphatidic acid (LPA) also induce autophosphorylation and increase kinase activity. Phosphorylation by MYLK promotes ITGB2 activation and is thus essential to trigger neutrophil transmigration during lung injury. Dephosphorylated by PTPN12.

Its subcellular location is the cytoplasm. It is found in the perinuclear region. The protein localises to the cell membrane. It localises to the cell junction. The protein resides in the focal adhesion. Its subcellular location is the cell projection. It is found in the lamellipodium. The protein localises to the cell cortex. It localises to the nucleus. It carries out the reaction L-tyrosyl-[protein] + ATP = O-phospho-L-tyrosyl-[protein] + ADP + H(+). With respect to regulation, activated in response to stimuli that lead to increased intracellular Ca(2+) levels; this activation is indirect and may be mediated by calcium-mediated production of reactive oxygen species (ROS). Activated by autophosphorylation at Tyr-402; this creates a binding site for SRC family kinases and leads to phosphorylation at additional tyrosine residues. Phosphorylation at Tyr-402, Tyr-579 and Tyr-580 is required for optimal kinase activity. In terms of biological role, non-receptor protein-tyrosine kinase that regulates reorganization of the actin cytoskeleton, cell polarization, cell migration, adhesion, spreading and bone remodeling. Plays a role in the regulation of the humoral immune response, and is required for normal levels of marginal B-cells in the spleen and normal migration of splenic B-cells. Required for normal macrophage polarization and migration towards sites of inflammation. Regulates cytoskeleton rearrangement and cell spreading in T-cells, and contributes to the regulation of T-cell responses. Promotes osteoclastic bone resorption; this requires both PTK2B/PYK2 and SRC. May inhibit differentiation and activity of osteoprogenitor cells. Functions in signaling downstream of integrin and collagen receptors, immune receptors, G-protein coupled receptors (GPCR), cytokine, chemokine and growth factor receptors, and mediates responses to cellular stress. Forms multisubunit signaling complexes with SRC and SRC family members upon activation; this leads to the phosphorylation of additional tyrosine residues, creating binding sites for scaffold proteins, effectors and substrates. Regulates numerous signaling pathways. Promotes activation of phosphatidylinositol 3-kinase and of the AKT1 signaling cascade. Promotes activation of NOS3. Regulates production of the cellular messenger cGMP. Promotes activation of the MAP kinase signaling cascade, including activation of MAPK1/ERK2, MAPK3/ERK1 and MAPK8/JNK1. Promotes activation of Rho family GTPases, such as RHOA and RAC1. Recruits the ubiquitin ligase MDM2 to P53/TP53 in the nucleus, and thereby regulates P53/TP53 activity, P53/TP53 ubiquitination and proteasomal degradation. Acts as a scaffold, binding to both PDPK1 and SRC, thereby allowing SRC to phosphorylate PDPK1 at 'Tyr-9, 'Tyr-373', and 'Tyr-376'. Promotes phosphorylation of NMDA receptors by SRC family members, and thereby contributes to the regulation of NMDA receptor ion channel activity and intracellular Ca(2+) levels. May also regulate potassium ion transport by phosphorylation of potassium channel subunits. Phosphorylates SRC; this increases SRC kinase activity. Phosphorylates ASAP1, NPHP1, KCNA2 and SHC1. Promotes phosphorylation of ASAP2, RHOU and PXN; this requires both SRC and PTK2/PYK2. This Mus musculus (Mouse) protein is Protein-tyrosine kinase 2-beta (Ptk2b).